Here is a 570-residue protein sequence, read N- to C-terminus: Serine/threonine-protein kinase STY17 (570 aa).

Residues 112-145 (LNGNSGDVDPSDPAVNEDAQSSYNSRSLAPPTFG) form a disordered region. The segment covering 129–145 (DAQSSYNSRSLAPPTFG) has biased composition (polar residues). Residues 180–260 (EITFSTIDRP…PCSKQKSITF (81 aa)) form the ACT domain. The Protein kinase domain maps to 292-545 (LKIEKKVACG…EIIEMLNQLI (254 aa)). ATP is bound by residues 298 to 306 (VACGSYGEL) and Lys319. Asp413 (proton acceptor) is an active-site residue. Phosphoserine is present on Ser441. Thr445 carries the post-translational modification Phosphothreonine.

It belongs to the protein kinase superfamily. Ser/Thr protein kinase family. In terms of processing, autophosphorylated on serine and threonine residues. Autophosphorylated at Thr-445.

The protein localises to the cytoplasm. Its subcellular location is the cytosol. It catalyses the reaction L-seryl-[protein] + ATP = O-phospho-L-seryl-[protein] + ADP + H(+). The enzyme catalyses L-threonyl-[protein] + ATP = O-phospho-L-threonyl-[protein] + ADP + H(+). Activated by autophosphorylation at Thr-445. Serine/threonine protein kinase that specifically phosphorylates chloroplast precursor proteins in the cytosol within the cleavable presequences (transit peptides). May be part of a cytosolic regulatory network involved in chloroplast protein import. Does not phosphorylate mitochondrion precursor proteins. Specific for ATP and does not utilize other NTPs. Plays a role in chloroplast biogenesis and differentiation in cotyledons, possibly through phosphorylation of chloroplast preproteins. This chain is Serine/threonine-protein kinase STY17, found in Arabidopsis thaliana (Mouse-ear cress).